The primary structure comprises 917 residues: Protein translocase subunit SecA (917 aa).

ATP contacts are provided by residues Gln87, 105–109 (GEGKT), and Asp516. Positions 901, 903, 912, and 913 each coordinate Zn(2+).

Belongs to the SecA family. Monomer and homodimer. Part of the essential Sec protein translocation apparatus which comprises SecA, SecYEG and auxiliary proteins SecDF-YajC and YidC. Requires Zn(2+) as cofactor.

The protein resides in the cell inner membrane. It localises to the cytoplasm. The enzyme catalyses ATP + H2O + cellular proteinSide 1 = ADP + phosphate + cellular proteinSide 2.. Its function is as follows. Part of the Sec protein translocase complex. Interacts with the SecYEG preprotein conducting channel. Has a central role in coupling the hydrolysis of ATP to the transfer of proteins into and across the cell membrane, serving both as a receptor for the preprotein-SecB complex and as an ATP-driven molecular motor driving the stepwise translocation of polypeptide chains across the membrane. The sequence is that of Protein translocase subunit SecA from Acidovorax sp. (strain JS42).